The sequence spans 263 residues: Small ribosomal subunit protein uS3 (263 aa).

The region spanning 39–107 is the KH type-2 domain; sequence VREYLKKKLK…PVHVNIEEIR (69 aa). The disordered stretch occupies residues 211 to 263; the sequence is GELPPEAATPREEERRPRRAPRGDRPDGGRPGRPGGRGRGPRKADAAPAPEGE. Residues 219–240 are compositionally biased toward basic and acidic residues; it reads TPREEERRPRRAPRGDRPDGGR.

The protein belongs to the universal ribosomal protein uS3 family. Part of the 30S ribosomal subunit. Forms a tight complex with proteins S10 and S14.

Binds the lower part of the 30S subunit head. Binds mRNA in the 70S ribosome, positioning it for translation. In Bordetella petrii (strain ATCC BAA-461 / DSM 12804 / CCUG 43448), this protein is Small ribosomal subunit protein uS3.